A 603-amino-acid chain; its full sequence is Putative ankyrin repeat protein FPV162 (603 aa).

ANK repeat units follow at residues 23 to 53 (FKDTPLHKAVMLPDAVERIRMFVSKGADINV), 57 to 87 (FKKTALHYAAKKLATPEVLKTLIYLGTNVNV), 91 to 120 (FESTPLHYAVQENGLEATKKLLDLGADPNT), 124 to 155 (NGQTPLHCAAMVIPDGPELVRILVEYGANVNA), 159 to 189 (KHNTPLALAAELSNTNKTIETLIELGADVKI), 193 to 223 (DGITPLHLAAKSSSDSKTVETLILHGADVNA), 227 to 257 (EGNTPLHDAATSYELSNTIEMLIEYGAEVNA), 261 to 291 (VGDTPLHCAARSRNPVHKLKTLIAHGSNVNA), 295 to 325 (ISVTPLHLATYSDNATEALKVLIEHGAEVNS), 329 to 362 (YGRTPMHYISRSYSSQSLKTAVELLVEHGADIEA), 366 to 397 (IGGTPLSSACNNIEYDLRLIECFIEYGADINT), 401 to 428 (RDETPLYSAIKYPEIVNLLMNYSASTNI), 432 to 467 (SNITPLESAIANCIGSAEIIVTQIILDAFRFPDIKN), and 504 to 533 (NNMYGLDIFIRSNNINLLSSLVSNVEDIYL).

The polypeptide is Putative ankyrin repeat protein FPV162 (Vertebrata (FPV)).